Reading from the N-terminus, the 35-residue chain is Photosystem II reaction center protein M (35 aa).

Met1 bears the N-formylmethionine mark. A helical membrane pass occupies residues 7–28 (GFIASILFVLVPTVFLLILFIQ).

This sequence belongs to the PsbM family. PSII is composed of 1 copy each of membrane proteins PsbA, PsbB, PsbC, PsbD, PsbE, PsbF, PsbH, PsbI, PsbJ, PsbK, PsbL, PsbM, PsbT, PsbX, PsbY, PsbZ, Psb30/Ycf12, peripheral proteins PsbO, CyanoQ (PsbQ), PsbU, PsbV and a large number of cofactors. It forms dimeric complexes.

The protein localises to the cellular thylakoid membrane. Its function is as follows. One of the components of the core complex of photosystem II (PSII). PSII is a light-driven water:plastoquinone oxidoreductase that uses light energy to abstract electrons from H(2)O, generating O(2) and a proton gradient subsequently used for ATP formation. It consists of a core antenna complex that captures photons, and an electron transfer chain that converts photonic excitation into a charge separation. This subunit is found at the monomer-monomer interface. Involved in assembly of monomeric PSII from the CP43-less intermediate. The polypeptide is Photosystem II reaction center protein M (Synechocystis sp. (strain ATCC 27184 / PCC 6803 / Kazusa)).